Here is a 470-residue protein sequence, read N- to C-terminus: Syncoilin (470 aa).

A disordered region spans residues 1–43; that stretch reads MASPEPLRGGDGARASREPHTEASFPLQESESPKEAKTFNPEA. The interval 1–148 is head; it reads MASPEPLRGG…TEGSLPAQPI (148 aa). A Phosphoserine modification is found at S32. Residues 157-452 enclose the IF rod domain; the sequence is SVEDLERLEA…AMLPKSLEQA (296 aa). The coil 1A stretch occupies residues 158 to 192; the sequence is VEDLERLEARFQQCVQAVSQLEEERDQLIHELVLL. Residues 193-219 are linker 1; sequence REPALQEVQQVHQDILAAYKLHAQAEL. The coil 1b stretch occupies residues 220–297; it reads ERDGLREEIR…KEQLQQQLEA (78 aa). Positions 298 to 337 are linker 2; sequence PPTQSDGHFLQESRRLSTQFENLMAESRQGLEEEYEPQLL. Residue S314 is modified to Phosphoserine. Positions 338–445 are coil 2; that stretch reads RLLERKEAGT…EELSTYKAML (108 aa). Positions 446 to 470 are disordered; the sequence is PKSLEQADAPTSQAGGVEAQSPGTV. Residues 446–470 are tail; that stretch reads PKSLEQADAPTSQAGGVEAQSPGTV.

It belongs to the intermediate filament family. In terms of assembly, may link the dystrophin-associated glycoprotein complex (DAPC) to intracellular desmin (DES) filaments. Interacts with DES and DTNA. In terms of tissue distribution, detected strongly in skeletal muscle and heart and weakly in lung (at protein level). Highly expressed in skeletal muscle and lung and weakly in lung and testis.

It is found in the cytoplasm. The protein resides in the perinuclear region. Functionally, atypical type III intermediate filament (IF) protein that may play a supportive role in the efficient coupling of mechanical stress between the myofibril and fiber exterior. May facilitate lateral force transmission during skeletal muscle contraction. Does not form homofilaments nor heterofilaments with other IF proteins. The chain is Syncoilin (Sync) from Mus musculus (Mouse).